We begin with the raw amino-acid sequence, 365 residues long: Phosphatidylcholine:ceramide cholinephosphotransferase 2 (365 aa).

Over residues 1–14 the composition is skewed to basic and acidic residues; sequence MDIIETAKLEEHLE. Residues 1–52 form a disordered region; that stretch reads MDIIETAKLEEHLENQPSDPTNTYARPAEPVEEENKNGNGKPKSLSSGLRKG. The segment covering 15 to 24 has biased composition (polar residues); the sequence is NQPSDPTNTY. The next 4 membrane-spanning stretches (helical) occupy residues 80-100, 128-148, 159-179, and 206-226; these read GIAF…ITVV, FSVS…QWLF, FCFI…VTTL, and LISG…DFLF. The active site involves H229. Residues 248-268 form a helical membrane-spanning segment; sequence FWWYHLICWLLSAAGIICILV. Active-site residues include H272 and D276. Residues 275–295 traverse the membrane as a helical segment; it reads IDVIIAYYITTRLFWWYHSMA. Residues 296–365 lie on the Cytoplasmic side of the membrane; it reads NEKNLKVSSQ…KIGEDNEKST (70 aa). Residues C331, C332, C343, and C348 are each lipidated (S-palmitoyl cysteine).

Belongs to the sphingomyelin synthase family. In terms of processing, palmitoylated on Cys-331, Cys-332, Cys-343 and Cys-348; which plays an important role in plasma membrane localization. In terms of tissue distribution, brain, heart, kidney, liver, muscle and stomach. Also expressed in a number of cell lines such as carcinoma HeLa cells, hepatoma Hep-G2 cells, and colon carcinoma Caco-2 cells.

The protein localises to the cell membrane. It is found in the golgi apparatus membrane. It catalyses the reaction an N-acylsphing-4-enine + a 1,2-diacyl-sn-glycero-3-phosphocholine = a sphingomyelin + a 1,2-diacyl-sn-glycerol. It carries out the reaction an N-acylsphinganine + a 1,2-diacyl-sn-glycero-3-phosphocholine = an N-acylsphinganine-1-phosphocholine + a 1,2-diacyl-sn-glycerol. The enzyme catalyses an N-acyl-(4R)-4-hydroxysphinganine + a 1,2-diacyl-sn-glycero-3-phosphocholine = an N-acyl-(4R)-4-hydroxysphinganine-phosphocholine + a 1,2-diacyl-sn-glycerol. The catalysed reaction is an N-acylsphinganine + a 1,2-diacyl-sn-glycero-3-phosphoethanolamine = an N-acylsphinganine-1-phosphoethanolamine + a 1,2-diacyl-sn-glycerol. It catalyses the reaction an N-acyl-(4R)-4-hydroxysphinganine + a 1,2-diacyl-sn-glycero-3-phosphoethanolamine = an N-acyl-(4R)-4-hydroxysphinganine-1-phosphoethanolamine + a 1,2-diacyl-sn-glycerol. It carries out the reaction an N-acylsphing-4-enine + a 1,2-diacyl-sn-glycero-3-phosphoethanolamine = an N-acylsphing-4-enine 1-phosphoethanolamine + a 1,2-diacyl-sn-glycerol. The enzyme catalyses 1,2-dihexadecanoyl-sn-glycero-3-phosphocholine + an N-acylsphing-4-enine = 1,2-dihexadecanoyl-sn-glycerol + a sphingomyelin. The catalysed reaction is 1-(9Z-octadecenoyl)-2-acyl-sn-3-glycerol + a sphingomyelin = a 1-(9Z-octadecenoyl)-2-acyl-sn-glycero-3-phosphocholine + an N-acylsphing-4-enine. It catalyses the reaction N-hexadecanoylsphinganine + a 1,2-diacyl-sn-glycero-3-phosphocholine = N-hexadecanoyl-sphinganine-1-phosphocholine + a 1,2-diacyl-sn-glycerol. It carries out the reaction N-hexadecanoyl-(4R)-hydroxysphinganine + a 1,2-diacyl-sn-glycero-3-phosphocholine = N-hexadecanoyl-(4R)-hydroxysphinganine-phosphocholine + a 1,2-diacyl-sn-glycerol. The enzyme catalyses N-hexadecanoylsphinganine + a 1,2-diacyl-sn-glycero-3-phosphoethanolamine = N-hexadecanoyl-sphinganine-1-phosphoethanolamine + a 1,2-diacyl-sn-glycerol. The catalysed reaction is N-hexadecanoyl-(4R)-hydroxysphinganine + a 1,2-diacyl-sn-glycero-3-phosphoethanolamine = N-hexadecanoyl-(4R)-hydroxysphinganine-1-phosphoethanolamine + a 1,2-diacyl-sn-glycerol. It participates in sphingolipid metabolism. With respect to regulation, inhibited by bacterial PC-phospholipase C inhibitor D609. Sphingomyelin synthase that primarily contributes to sphingomyelin synthesis and homeostasis at the plasma membrane. Catalyzes the reversible transfer of phosphocholine moiety in sphingomyelin biosynthesis: in the forward reaction transfers phosphocholine head group of phosphatidylcholine (PC) on to ceramide (CER) to form ceramide phosphocholine (sphingomyelin, SM) and diacylglycerol (DAG) as by-product, and in the reverse reaction transfers phosphocholine from SM to DAG to form PC and CER. The direction of the reaction appears to depend on the levels of CER and DAG in the plasma membrane. Does not use free phosphorylcholine or CDP-choline as donors. Can also transfer phosphoethanolamine head group of phosphatidylethanolamine (PE) on to ceramide (CER) to form ceramide phosphoethanolamine (CPE). Regulates receptor-mediated signal transduction via mitogenic DAG and proapoptotic CER, as well as via SM, a structural component of membrane rafts that serve as platforms for signal transduction and protein sorting. To a lesser extent, plays a role in secretory transport via regulation of DAG pool at the Golgi apparatus and its downstream effects on PRKD1. Required for normal bone matrix mineralization. The polypeptide is Phosphatidylcholine:ceramide cholinephosphotransferase 2 (Homo sapiens (Human)).